Reading from the N-terminus, the 388-residue chain is Chorismate synthase (388 aa).

NADP(+) contacts are provided by Arg39 and Arg45. FMN is bound by residues 130 to 132 (RSS), 251 to 252 (NA), Gly296, 311 to 315 (KPIPT), and Arg337.

It belongs to the chorismate synthase family. As to quaternary structure, homotetramer. FMNH2 is required as a cofactor.

It carries out the reaction 5-O-(1-carboxyvinyl)-3-phosphoshikimate = chorismate + phosphate. Its pathway is metabolic intermediate biosynthesis; chorismate biosynthesis; chorismate from D-erythrose 4-phosphate and phosphoenolpyruvate: step 7/7. Its function is as follows. Catalyzes the anti-1,4-elimination of the C-3 phosphate and the C-6 proR hydrogen from 5-enolpyruvylshikimate-3-phosphate (EPSP) to yield chorismate, which is the branch point compound that serves as the starting substrate for the three terminal pathways of aromatic amino acid biosynthesis. This reaction introduces a second double bond into the aromatic ring system. The sequence is that of Chorismate synthase from Streptococcus pneumoniae serotype 2 (strain D39 / NCTC 7466).